The sequence spans 214 residues: A-type ATP synthase subunit D (214 aa).

This sequence belongs to the V-ATPase D subunit family. In terms of assembly, has multiple subunits with at least A(3), B(3), C, D, E, F, H, I and proteolipid K(x).

Its subcellular location is the cell membrane. Functionally, component of the A-type ATP synthase that produces ATP from ADP in the presence of a proton gradient across the membrane. The sequence is that of A-type ATP synthase subunit D from Thermococcus kodakarensis (strain ATCC BAA-918 / JCM 12380 / KOD1) (Pyrococcus kodakaraensis (strain KOD1)).